Reading from the N-terminus, the 471-residue chain is MEILCEDNISLSSIPNSLMQLGDGPRLYHNDFNSRDANTSEASNWTIDAENRTNLSCEGYLPPTCLSILHLQEKNWSALLTTVVIILTIAGNILVIMAVSLEKKLQNATNYFLMSLAIADMLLGFLVMPVSMLTILYGYRWPLPSKLCAIWIYLDVLFSTASIMHLCAISLDRYVAIQNPIHHSRFNSRTKAFLKIIAVWTISVGISMPIPVFGLQDDSKVFKEGSCLLADDNFVLIGSFVAFFIPLTIMVITYFLTIKSLQKEATLCVSDLSTRAKLASFSFLPQSSLSSEKLFQRSIHREPGSYAGRRTMQSISNEQKACKVLGIVFFLFVVMWCPFFITNIMAVICKESCNENVIGALLNVFVWIGYLSSAVNPLVYTLFNKTYRSAFSRYIQCQYKENRKPLQLILVNTIPALAYKSSQLQVGQKKNSQEDAEQTVDDCSMVTLGKQQSEENCTDNIETVNEKVSCV.

Topologically, residues Met-1–Leu-80 are extracellular. N-linked (GlcNAc...) asparagine glycosylation is found at Asn-8, Asn-38, Asn-44, Asn-51, and Asn-54. The helical transmembrane segment at Thr-81–Met-97 threads the bilayer. Residues Ala-98–Tyr-111 lie on the Cytoplasmic side of the membrane. Residues Phe-112–Tyr-137 form a helical membrane-spanning segment. The Extracellular portion of the chain corresponds to Gly-138–Lys-146. Residues Leu-147–Leu-171 traverse the membrane as a helical segment. A disulfide bridge connects residues Cys-148 and Cys-227. A serotonin-binding site is contributed by Asp-155. A DRY motif; important for ligand-induced conformation changes motif is present at residues Asp-172–Tyr-174. The Cytoplasmic portion of the chain corresponds to Asp-172–Lys-191. The helical transmembrane segment at Ala-192–Leu-215 threads the bilayer. Residues Gln-216–Asp-232 lie on the Extracellular side of the membrane. Residues Asn-233 to Ile-258 traverse the membrane as a helical segment. The Cytoplasmic segment spans residues Lys-259–Cys-322. Ser-280 carries the post-translational modification Phosphoserine. The chain crosses the membrane as a helical span at residues Lys-323–Ile-348. Asn-343 serves as a coordination point for serotonin. Residues Cys-349 and Cys-353 are joined by a disulfide bond. The Extracellular segment spans residues Cys-349 to Asn-356. A helical membrane pass occupies residues Val-357 to Leu-382. Residues Asn-376–Tyr-380 carry the NPxxY motif; important for ligand-induced conformation changes and signaling motif. Over Phe-383 to Val-471 the chain is Cytoplasmic. The short motif at Ser-469–Val-471 is the PDZ-binding element.

The protein belongs to the G-protein coupled receptor 1 family. In terms of assembly, interacts (via C-terminus) with MPDZ and PATJ. May interact (via C-terminus) with MPP3, PRDX6, DLG4, DLG1, CASK, APBA1 and MAGI2. Interacts with GRM2 and DRD2; this may affect signaling. In terms of tissue distribution, detected in adult intestine, especially in mucosal epithelium, longitudinal and circular layers of muscularis externa and myenteric plexuses. Highly expressed in Paneth cells, and detected at lower levels in enterocytes (at protein level). Detected in brain cortex.

The protein localises to the cell membrane. Its subcellular location is the cell projection. It is found in the axon. The protein resides in the cytoplasmic vesicle. It localises to the membrane. The protein localises to the caveola. Its subcellular location is the dendrite. It is found in the presynapse. With respect to regulation, G-protein coupled receptor activity is regulated by lipids: oleamide increases HTR2A-mediated activity. Functionally, G-protein coupled receptor for 5-hydroxytryptamine (serotonin). Also functions as a receptor for various drugs and psychoactive substances, including mescaline, psilocybin, 1-(2,5-dimethoxy-4-iodophenyl)-2-aminopropane (DOI) and lysergic acid diethylamide (LSD). Ligand binding causes a conformation change that triggers signaling via guanine nucleotide-binding proteins (G proteins) and modulates the activity of downstream effectors. HTR2A is coupled to G(q)/G(11) G alpha proteins and activates phospholipase C-beta, releasing diacylglycerol (DAG) and inositol 1,4,5-trisphosphate (IP3) second messengers that modulate the activity of phosphatidylinositol 3-kinase and promote the release of Ca(2+) ions from intracellular stores, respectively. Beta-arrestin family members inhibit signaling via G proteins and mediate activation of alternative signaling pathways. Affects neural activity, perception, cognition and mood. Plays a role in the regulation of behavior, including responses to anxiogenic situations and psychoactive substances. Plays a role in intestinal smooth muscle contraction, and may play a role in arterial vasoconstriction. This chain is 5-hydroxytryptamine receptor 2A (Htr2a), found in Rattus norvegicus (Rat).